Consider the following 25-residue polypeptide: Unknown protein 4 (25 aa).

Residues 1-10 are compositionally biased toward basic and acidic residues; that stretch reads IEHNAEEIRK. The interval 1–25 is disordered; the sequence is IEHNAEEIRKTAIRTAVQNTAQQTK. Positions 16 to 25 are enriched in polar residues; it reads AVQNTAQQTK.

The polypeptide is Unknown protein 4 (Lonomia obliqua (Moth)).